Here is a 463-residue protein sequence, read N- to C-terminus: NADH-ubiquinone oxidoreductase chain 4 (463 aa).

A run of 13 helical transmembrane segments spans residues 24-44, 62-82, 98-118, 119-139, 151-171, 198-218, 232-252, 260-280, 285-305, 310-330, 353-373, 404-424, and 442-462; these read LWAG…IVLN, TISA…LIAS, IIMI…LELI, LFYI…TRWG, FMFY…AIYI, WALS…HLWL, ILAA…IALF, LSLA…VICV, LKAL…AAIF, WGMN…SALF, LLLP…LGLP, VFGA…TPFT, and LHIL…IAWL.

This sequence belongs to the complex I subunit 4 family.

It localises to the mitochondrion membrane. It carries out the reaction a ubiquinone + NADH + 5 H(+)(in) = a ubiquinol + NAD(+) + 4 H(+)(out). Its function is as follows. Core subunit of the mitochondrial membrane respiratory chain NADH dehydrogenase (Complex I) that is believed to belong to the minimal assembly required for catalysis. Complex I functions in the transfer of electrons from NADH to the respiratory chain. The immediate electron acceptor for the enzyme is believed to be ubiquinone. The sequence is that of NADH-ubiquinone oxidoreductase chain 4 (ND4) from Strongylocentrotus purpuratus (Purple sea urchin).